We begin with the raw amino-acid sequence, 150 residues long: Large ribosomal subunit protein uL11 (150 aa).

It belongs to the universal ribosomal protein uL11 family. Part of the ribosomal stalk of the 50S ribosomal subunit. Interacts with L10 and the large rRNA to form the base of the stalk. L10 forms an elongated spine to which L12 dimers bind in a sequential fashion forming a multimeric L10(L12)X complex. In terms of processing, one or more lysine residues are methylated.

Functionally, forms part of the ribosomal stalk which helps the ribosome interact with GTP-bound translation factors. In Azobacteroides pseudotrichonymphae genomovar. CFP2, this protein is Large ribosomal subunit protein uL11.